Consider the following 968-residue polypeptide: Alanine--tRNA ligase, cytoplasmic (968 aa).

At M1 the chain carries N-acetylmethionine. Residue S3 is modified to Phosphoserine. K19 bears the N6-acetyllysine mark. Residues R77, H95, W176, and 214–216 contribute to the ATP site; that span reads IWN. L-alanine contacts are provided by N216 and D239. G243 provides a ligand contact to ATP. Residues S399 and S555 each carry the phosphoserine modification. Residues H605, H609, C723, and H727 each contribute to the Zn(2+) site. The Nuclear localization signal motif lies at 750 to 763; it reads RRIVAVTGAEAQKA. K876 bears the N6-acetyllysine mark. Position 943 is an N6,N6,N6-trimethyllysine; alternate (K943). K943 is subject to N6,N6-dimethyllysine; alternate. K943 is subject to N6-methyllysine; alternate.

This sequence belongs to the class-II aminoacyl-tRNA synthetase family. As to quaternary structure, monomer. Interacts with ANKRD16; the interaction is direct. The cofactor is Zn(2+). Post-translationally, ISGylated. In terms of processing, methylation at 'Lys-943' by METTL21C.

It is found in the cytoplasm. The protein localises to the nucleus. The catalysed reaction is tRNA(Ala) + L-alanine + ATP = L-alanyl-tRNA(Ala) + AMP + diphosphate. It catalyses the reaction (S)-lactate + ATP + H(+) = (S)-lactoyl-AMP + diphosphate. It carries out the reaction (S)-lactoyl-AMP + L-lysyl-[protein] = N(6)-[(S)-lactoyl]-L-lysyl-[protein] + AMP + 2 H(+). Its activity is regulated as follows. The protein lactyltransferase activity is inhibited by beta-alanine. Functionally, catalyzes the attachment of alanine to tRNA(Ala) in a two-step reaction: alanine is first activated by ATP to form Ala-AMP and then transferred to the acceptor end of tRNA(Ala). Also edits incorrectly charged tRNA(Ala) via its editing domain. In presence of high levels of lactate, also acts as a protein lactyltransferase that mediates lactylation of lysine residues in target proteins, such as TEAD1, TP53/p53 and YAP1. Protein lactylation takes place in a two-step reaction: lactate is first activated by ATP to form lactate-AMP and then transferred to lysine residues of target proteins. Acts as an inhibitor of TP53/p53 activity by catalyzing lactylation of TP53/p53. Acts as a positive regulator of the Hippo pathway by mediating lactylation of TEAD1 and YAP1. This is Alanine--tRNA ligase, cytoplasmic (Aars1) from Rattus norvegicus (Rat).